Reading from the N-terminus, the 113-residue chain is Putative pterin-4-alpha-carbinolamine dehydratase (113 aa).

The protein belongs to the pterin-4-alpha-carbinolamine dehydratase family.

The catalysed reaction is (4aS,6R)-4a-hydroxy-L-erythro-5,6,7,8-tetrahydrobiopterin = (6R)-L-erythro-6,7-dihydrobiopterin + H2O. The polypeptide is Putative pterin-4-alpha-carbinolamine dehydratase (Bordetella bronchiseptica (strain ATCC BAA-588 / NCTC 13252 / RB50) (Alcaligenes bronchisepticus)).